Here is a 250-residue protein sequence, read N- to C-terminus: Flavin-dependent thymidylate synthase (250 aa).

The region spanning 7-233 (LRVQLIAKTD…PAVFADFEIA (227 aa)) is the ThyX domain. FAD contacts are provided by residues S71, 95–97 (RHR), and Q103. Residues 92–95 (ELIR), 103–107 (QLSQR), and R172 each bind dUMP. A ThyX motif motif is present at residues 95–105 (RHRHFSYSQLS). Residues 188-190 (NYR) and H194 contribute to the FAD site. DUMP is bound at residue R199. The Involved in ionization of N3 of dUMP, leading to its activation role is filled by R199.

This sequence belongs to the thymidylate synthase ThyX family. As to quaternary structure, homotetramer. FAD serves as cofactor.

It catalyses the reaction dUMP + (6R)-5,10-methylene-5,6,7,8-tetrahydrofolate + NADPH + H(+) = dTMP + (6S)-5,6,7,8-tetrahydrofolate + NADP(+). It participates in pyrimidine metabolism; dTTP biosynthesis. Functionally, catalyzes the reductive methylation of 2'-deoxyuridine-5'-monophosphate (dUMP) to 2'-deoxythymidine-5'-monophosphate (dTMP) while utilizing 5,10-methylenetetrahydrofolate (mTHF) as the methyl donor, and NADPH and FADH(2) as the reductant. The polypeptide is Flavin-dependent thymidylate synthase (Mycobacterium avium (strain 104)).